The chain runs to 123 residues: Ribonuclease P protein component (123 aa).

This sequence belongs to the RnpA family. In terms of assembly, consists of a catalytic RNA component (M1 or rnpB) and a protein subunit.

It catalyses the reaction Endonucleolytic cleavage of RNA, removing 5'-extranucleotides from tRNA precursor.. In terms of biological role, RNaseP catalyzes the removal of the 5'-leader sequence from pre-tRNA to produce the mature 5'-terminus. It can also cleave other RNA substrates such as 4.5S RNA. The protein component plays an auxiliary but essential role in vivo by binding to the 5'-leader sequence and broadening the substrate specificity of the ribozyme. In Streptococcus pneumoniae (strain Hungary19A-6), this protein is Ribonuclease P protein component.